Here is a 590-residue protein sequence, read N- to C-terminus: Aspartate--tRNA(Asp/Asn) ligase (590 aa).

Glu175 lines the L-aspartate pocket. Residues 199–202 (QQYK) are aspartate. Arg221 and His450 together coordinate L-aspartate. 221-223 (RDE) provides a ligand contact to ATP. Residue Glu484 participates in ATP binding. Arg491 contacts L-aspartate. 536–539 (GVDR) lines the ATP pocket.

This sequence belongs to the class-II aminoacyl-tRNA synthetase family. Type 1 subfamily. In terms of assembly, homodimer.

The protein resides in the cytoplasm. The enzyme catalyses tRNA(Asx) + L-aspartate + ATP = L-aspartyl-tRNA(Asx) + AMP + diphosphate. Functionally, aspartyl-tRNA synthetase with relaxed tRNA specificity since it is able to aspartylate not only its cognate tRNA(Asp) but also tRNA(Asn). Reaction proceeds in two steps: L-aspartate is first activated by ATP to form Asp-AMP and then transferred to the acceptor end of tRNA(Asp/Asn). This is Aspartate--tRNA(Asp/Asn) ligase from Bradyrhizobium sp. (strain BTAi1 / ATCC BAA-1182).